The primary structure comprises 371 residues: Cytochrome b (371 aa).

4 helical membrane passes run 25-45 (FGSMLLTCLVLQVLTGFFLAV), 69-90 (WMMQNLHAIGASMFFICIYIHI), 105-125 (WMSGITLLITLMATALFGYVL), and 170-190 (FFALHFILPFAIISLSSLHII). 2 residues coordinate heme b: histidine 75 and histidine 89. 2 residues coordinate heme b: histidine 174 and histidine 188. Histidine 193 contacts a ubiquinone. A run of 4 helical transmembrane segments spans residues 218 to 238 (HKDLLLLTLMMMFLFIIVSFF), 280 to 300 (LGGALALVASIMILFTTPFTH), 312 to 332 (LSQLMFWTLVSTFITITWAAT), and 339 to 358 (FIAISQVTSMLYFTFFLSIP).

The protein belongs to the cytochrome b family. As to quaternary structure, the cytochrome bc1 complex contains 3 respiratory subunits (MT-CYB, CYC1 and UQCRFS1), 2 core proteins (UQCRC1 and UQCRC2) and probably 6 low-molecular weight proteins. The cofactor is heme b.

It localises to the mitochondrion inner membrane. Functionally, component of the ubiquinol-cytochrome c reductase complex (complex III or cytochrome b-c1 complex) that is part of the mitochondrial respiratory chain. The b-c1 complex mediates electron transfer from ubiquinol to cytochrome c. Contributes to the generation of a proton gradient across the mitochondrial membrane that is then used for ATP synthesis. The sequence is that of Cytochrome b (MT-CYB) from Liasis olivaceus (Olive python).